Here is a 146-residue protein sequence, read N- to C-terminus: Hemoglobin subunit beta (146 aa).

The region spanning 2-146 (HWTAEEKQLI…VAHALARKYH (145 aa)) is the Globin domain. Heme b is bound by residues histidine 63 and histidine 92.

Belongs to the globin family. In terms of assembly, heterotetramer of two alpha chains and two beta chains. Red blood cells.

In terms of biological role, involved in oxygen transport from the lung to the various peripheral tissues. The protein is Hemoglobin subunit beta (HBB) of Phalacrocorax carbo (Great cormorant).